Consider the following 112-residue polypeptide: Dolichyl-diphosphooligosaccharide--protein glycosyltransferase subunit DAD1 (112 aa).

Topologically, residues 1 to 27 (MVELSSVISKFYNDYVQNTPKKLKLVD) are cytoplasmic. A helical membrane pass occupies residues 28 to 48 (IYLGYILLTGIIQFVYCCLVG). At 49 to 51 (TFP) the chain is on the lumenal side. The chain crosses the membrane as a helical span at residues 52-72 (FNSFLSGFISTVSCFVLAVCL). At 73-91 (RLQANPQNKSVFAGISPER) the chain is on the cytoplasmic side. A helical transmembrane segment spans residues 92-112 (GFADFIFAHVILHLVVMNFIG).

The protein belongs to the DAD/OST2 family. As to quaternary structure, component of the oligosaccharyltransferase (OST) complex.

It is found in the endoplasmic reticulum membrane. The protein operates within protein modification; protein glycosylation. In terms of biological role, subunit of the oligosaccharyl transferase (OST) complex that catalyzes the initial transfer of a defined glycan (Glc(3)Man(9)GlcNAc(2) in eukaryotes) from the lipid carrier dolichol-pyrophosphate to an asparagine residue within an Asn-X-Ser/Thr consensus motif in nascent polypeptide chains, the first step in protein N-glycosylation. N-glycosylation occurs cotranslationally and the complex associates with the Sec61 complex at the channel-forming translocon complex that mediates protein translocation across the endoplasmic reticulum (ER). All subunits are required for a maximal enzyme activity. Probably as part of the N-glycosylation pathway, plays a role in the regulation of tissue growth and apoptosis. In Drosophila melanogaster (Fruit fly), this protein is Dolichyl-diphosphooligosaccharide--protein glycosyltransferase subunit DAD1.